The chain runs to 612 residues: Protein brambleberry (612 aa).

An N-terminal signal peptide occupies residues Met-1–Ala-20. The next 2 helical transmembrane spans lie at Leu-364–Leu-384 and Leu-417–Ala-437. Disordered regions lie at residues Leu-452–Ser-476 and Asn-555–Gly-574. Over residues Pro-457–Glu-470 the composition is skewed to basic and acidic residues. Positions Arg-556–Gly-574 are enriched in low complexity.

It is found in the nucleus membrane. Functionally, required for nuclear membrane fusion during karyogamy. The chain is Protein brambleberry (bmb) from Danio rerio (Zebrafish).